The chain runs to 262 residues: Acyl-[acyl-carrier-protein]--UDP-N-acetylglucosamine O-acyltransferase (262 aa).

This sequence belongs to the transferase hexapeptide repeat family. LpxA subfamily. In terms of assembly, homotrimer.

Its subcellular location is the cytoplasm. It carries out the reaction a (3R)-hydroxyacyl-[ACP] + UDP-N-acetyl-alpha-D-glucosamine = a UDP-3-O-[(3R)-3-hydroxyacyl]-N-acetyl-alpha-D-glucosamine + holo-[ACP]. It participates in glycolipid biosynthesis; lipid IV(A) biosynthesis; lipid IV(A) from (3R)-3-hydroxytetradecanoyl-[acyl-carrier-protein] and UDP-N-acetyl-alpha-D-glucosamine: step 1/6. Involved in the biosynthesis of lipid A, a phosphorylated glycolipid that anchors the lipopolysaccharide to the outer membrane of the cell. This is Acyl-[acyl-carrier-protein]--UDP-N-acetylglucosamine O-acyltransferase from Shigella boydii serotype 18 (strain CDC 3083-94 / BS512).